The sequence spans 236 residues: Apoptosis regulator Bcl-2 (236 aa).

Positions 10 to 30 (DNREIVMKYIHYKLSQRGYEW) match the BH4 motif. Thr69 is subject to Phosphothreonine; by MAPK8. Phosphoserine; by MAPK8 and PKC is present on Ser70. Ser84 carries the phosphoserine; by MAPK8 modification. The BH3 motif lies at 90–104 (VHLTLRRAGDDFSRR). A BH1 motif is present at residues 133–152 (ELFRDGVNWGRIVAFFEFGG). The BH2 motif lies at 184–199 (TWIQDNGGWDAFVELY). The chain crosses the membrane as a helical span at residues 209–230 (FSWLSLKALLSLALVGACITLG).

The protein belongs to the Bcl-2 family. Forms homodimers, and heterodimers with BAX, BAD, BAK and Bcl-X(L). Heterodimerization with BAX requires intact BH1 and BH2 motifs, and is necessary for anti-apoptotic activity. Component of the complex, at least composed of LRPPRC, BECN1 and BCL2; the interactions prevent BECN1 from forming an autophagy-inducing complex with PIK3C3. Interacts with EI24. Also interacts with APAF1, BBC3, BCL2L1, BNIPL, MRPL41 and TP53BP2. Binding to FKBP8 seems to target BCL2 to the mitochondria and probably interferes with the binding of BCL2 to its targets. Interacts with BAG1 in an ATP-dependent manner. Interacts with RAF1 (the 'Ser-338' and 'Ser-339' phosphorylated form). Interacts (via the BH4 domain) with EGLN3; the interaction prevents the formation of the BAX-BCL2 complex and inhibits the anti-apoptotic activity of BCL2. Interacts with G0S2; this interaction also prevents the formation of the anti-apoptotic BAX-BCL2 complex. Interacts with RTL10/BOP. Interacts with the SCF(FBXO10) complex. Interacts (via the loop between motifs BH4 and BH3) with NLRP1 (via LRR repeats), but not with NLRP2, NLRP3, NLRP4, PYCARD, nor MEFV. Interacts with GIMAP3/IAN4, GIMAP4/IAN1 and GIMAP5/IAN5. Interacts with BCAP31. Interacts with IRF3; the interaction is inhibited by Sendai virus infection. Interacts with BECN1; thereby inhibiting autophagy in non-starvation conditions. Interacts with AMBRA1; thereby inhibiting autophagy. In terms of processing, phosphorylation/dephosphorylation on Ser-70 regulates anti-apoptotic activity. Growth factor-stimulated phosphorylation on Ser-70 by PKC is required for the anti-apoptosis activity and occurs during the G2/M phase of the cell cycle. In the absence of growth factors, BCL2 appears to be phosphorylated by other protein kinases such as ERKs and stress-activated kinases. Phosphorylated by MAPK8/JNK1 at Thr-69, Ser-70 and Ser-84, which stimulates starvation-induced autophagy. Dephosphorylated by protein phosphatase 2A (PP2A). Proteolytically cleaved by caspases during apoptosis. The cleaved protein, lacking the BH4 motif, has pro-apoptotic activity, causes the release of cytochrome c into the cytosol promoting further caspase activity. Post-translationally, monoubiquitinated by PRKN, leading to an increase in its stability. Ubiquitinated by SCF(FBXO10), leading to its degradation by the proteasome.

It localises to the mitochondrion outer membrane. It is found in the nucleus membrane. Its subcellular location is the endoplasmic reticulum membrane. The protein resides in the cytoplasm. Its function is as follows. Suppresses apoptosis in a variety of cell systems including factor-dependent lymphohematopoietic and neural cells. Regulates cell death by controlling the mitochondrial membrane permeability. Appears to function in a feedback loop system with caspases. Inhibits caspase activity either by preventing the release of cytochrome c from the mitochondria and/or by binding to the apoptosis-activating factor (APAF-1). Also acts as an inhibitor of autophagy: interacts with BECN1 and AMBRA1 during non-starvation conditions and inhibits their autophagy function. May attenuate inflammation by impairing NLRP1-inflammasome activation, hence CASP1 activation and IL1B release. The sequence is that of Apoptosis regulator Bcl-2 (BCL2) from Canis lupus familiaris (Dog).